An 820-amino-acid polypeptide reads, in one-letter code: Breast cancer anti-estrogen resistance protein 3 homolog (820 aa).

Alanine 2 is modified (N-acetylalanine). Residues serine 32, serine 72, serine 77, serine 176, and serine 284 each carry the phosphoserine modification. Residues aspartate 40–glutamine 81 form a disordered region. One can recognise an SH2 domain in the interval tryptophan 148–isoleucine 247. At lysine 329 the chain carries N6-methyllysine. Residues glutamine 346 to proline 367 form a disordered region. Phosphoserine occurs at positions 353, 358, and 370. Omega-N-methylarginine is present on arginine 437. Residue serine 466 is modified to Phosphoserine. Residues aspartate 543–proline 813 enclose the Ras-GEF domain. The tract at residues leucine 739–arginine 743 is mediates the interaction with BCAR1/p130CAS.

Part of a complex comprised of PTPRA, BCAR1, BCAR3 (via SH2 domain) and SRC; the formation of the complex is dependent on integrin mediated-tyrosine phosphorylation of PTPRA. Within the complex, interacts (via SH2 domain) with PTPRA (when phosphorylated on 'Tyr-825'). Interacts (via Ras-GEF domain) with BCAR1. Interacts (via Ras-GEF domain) with NEDD9. Interacts with PTK2B/FAK1. Interacts with PTPN1. Interacts (via SH2 domain) with EGFR (when tyrosine-phosphorylated). Post-translationally, phosphorylated on tyrosine residues. As to expression, abundantly expressed in the lung and brain, with lower expression in splenic lymphocytes and liver (at protein level). Expressed in splenic lymphocytes (at protein level). Expressed in the lymph node cortical region, periphery of the splenic white pulp and in alveolar lung fibroblasts. Expressed in epithelial cells in the lens equatorial region and early stage nucleated cortical lens fiber cells. Expressed in the thymus. Expressed in B-cells.

Its subcellular location is the cytoplasm. It localises to the cell junction. The protein resides in the focal adhesion. Functionally, acts as an adapter protein downstream of several growth factor receptors to promote cell proliferation, migration, and redistribution of actin fibers. Specifically involved in INS/insulin signaling pathway by mediating MAPK1/ERK2-MAPK3/ERK1 activation and DNA synthesis. Promotes insulin-mediated membrane ruffling. In response to vasoconstrictor peptide EDN1, involved in the activation of RAP1 downstream of PTK2B via interaction with phosphorylated BCAR1. Inhibits cell migration and invasion via regulation of TGFB-mediated matrix digestion, actin filament rearrangement, and inhibition of invadopodia activity. May inhibit TGFB-SMAD signaling, via facilitating BCAR1 and SMAD2 and/or SMAD3 interaction. Regulates EGF-induced DNA synthesis. Required for the maintenance of ocular lens morphology and structural integrity, potentially via regulation of focal adhesion complex signaling. Acts upstream of PTPRA to regulate the localization of BCAR1 and PTPRA to focal adhesions, via regulation of SRC-mediated phosphorylation of PTPRA. Positively regulates integrin-induced tyrosine phosphorylation of BCAR1. Acts as a guanine nucleotide exchange factor (GEF) for small GTPases RALA, RAP1A and RRAS. However, in a contrasting study, lacks GEF activity towards RAP1. The chain is Breast cancer anti-estrogen resistance protein 3 homolog (Bcar3) from Mus musculus (Mouse).